The sequence spans 423 residues: uncharacterized protein (423 aa).

The protein belongs to the asfivirus E423R family.

The protein resides in the virion. This is an uncharacterized protein from African swine fever virus (isolate Pig/Kenya/KEN-50/1950) (ASFV).